We begin with the raw amino-acid sequence, 351 residues long: ABC transporter nucleoside-binding protein BmpA (351 aa).

The first 21 residues, 1 to 21, serve as a signal peptide directing secretion; that stretch reads MKKRVIAVSAIALASVAVLAG. Cys22 carries the N-palmitoyl cysteine lipid modification. Cys22 carries the S-diacylglycerol cysteine lipid modification.

It belongs to the BMP lipoprotein family. The complex is composed of two ATP-binding proteins (NupA), two transmembrane proteins (NupB and NupC) and a solute-binding protein (BmpA).

It localises to the cell membrane. Part of an ABC transporter complex involved in the uptake of all common nucleosides. This Lactococcus lactis subsp. cremoris (strain MG1363) protein is ABC transporter nucleoside-binding protein BmpA.